Consider the following 341-residue polypeptide: Flap endonuclease 1 (341 aa).

The segment at Met-1–Arg-98 is N-domain. Mg(2+)-binding residues include Asp-27, Asp-80, Glu-152, Glu-154, Asp-173, Asp-175, and Asp-236. Positions Glu-116–Lys-258 are I-domain. The tract at residues Lys-330–Phe-338 is interaction with PCNA.

Belongs to the XPG/RAD2 endonuclease family. FEN1 subfamily. As to quaternary structure, interacts with PCNA. PCNA stimulates the nuclease activity without altering cleavage specificity. It depends on Mg(2+) as a cofactor.

Functionally, structure-specific nuclease with 5'-flap endonuclease and 5'-3' exonuclease activities involved in DNA replication and repair. During DNA replication, cleaves the 5'-overhanging flap structure that is generated by displacement synthesis when DNA polymerase encounters the 5'-end of a downstream Okazaki fragment. Binds the unpaired 3'-DNA end and kinks the DNA to facilitate 5' cleavage specificity. Cleaves one nucleotide into the double-stranded DNA from the junction in flap DNA, leaving a nick for ligation. Also involved in the base excision repair (BER) pathway. Acts as a genome stabilization factor that prevents flaps from equilibrating into structures that lead to duplications and deletions. Also possesses 5'-3' exonuclease activity on nicked or gapped double-stranded DNA. The sequence is that of Flap endonuclease 1 from Thermococcus onnurineus (strain NA1).